Reading from the N-terminus, the 686-residue chain is MARSGRERRDQEEEAAVVSVERVFEGRVVPGWKEQVTLRALAVSALLGAMFSVIVMKLNLTTGIIPSLNVSAGLLGFFLLTSWTKLLDKAGVASVRPFTRQENTVVQTCVVACSGIAFSGGFGSYIFAMSDRISDQSGEARDEHNIKNPSLGWMIGFLFIVSFLGLFSVVPLRKIMIIDYKLIYPSGTATAHLINSFHTPQGAKLAKMQVKMLGKFFVMSFSWGFFQWFYTGGDGCGFMSFPTLGLEAYRNKFFFDFSATYVGVGMICPYLVNISVLLGGVMSWGIMWPLIEHKKGDWYPADLKPSSLRGIVGYRVFISISLILGDGLYNFLKVMTRTTTALVMQVRAMMSEPTLPVSGGGGQTPEETFDDKRRTELFLKDQIPNWLALSAYVVIAVVSIATVPRIFHQLRWYHVAVSYVVAPVLAFCNAYGCGLTDWSLATTYGKLAIFTVGAWADASDGGIIAGLAACGVMIGIVSTASDLTQDFKTGYMTLASPRSMFVSQVIGTAMGCVIAPSVFWLFYKAFHDIGMPGSEYPSPNALVYRNMAILGVQGLGSLPKHCLDLCIGFFVAAIAVNLARDLAAPKVARFLPLPMAMAIPFYLGPYFGIDMCIGSLIRFVWDRLDGARAKAFAPPVASGLICGDGIWTLPQSVLALAGVKPPICMKFLSRTTNIKVDAFIAKLPSS.

Helical transmembrane passes span 36-56 (VTLRALAVSALLGAMFSVIVM), 60-80 (LTTGIIPSLNVSAGLLGFFLL), 109-129 (CVVACSGIAFSGGFGSYIFAM), 151-171 (LGWMIGFLFIVSFLGLFSVVP), 212-232 (MLGKFFVMSFSWGFFQWFYTG), 271-291 (LVNISVLLGGVMSWGIMWPLI), 316-336 (VFISISLILGDGLYNFLKVMT), 383-403 (IPNWLALSAYVVIAVVSIATV), 415-435 (VAVSYVVAPVLAFCNAYGCGL), 461-481 (GGIIAGLAACGVMIGIVSTAS), 501-521 (FVSQVIGTAMGCVIAPSVFWL), 556-576 (GSLPKHCLDLCIGFFVAAIAV), 597-617 (MAIPFYLGPYFGIDMCIGSLI), and 639-659 (GLICGDGIWTLPQSVLALAGV).

The protein belongs to the YSL (TC 2.A.67.2) family.

Its subcellular location is the membrane. Its function is as follows. May be involved in the transport of nicotianamine-chelated metals. This Oryza sativa subsp. japonica (Rice) protein is Probable metal-nicotianamine transporter YSL10 (YSL10).